Reading from the N-terminus, the 739-residue chain is Double-strand break repair protein mus-23 (739 aa).

Mn(2+) contacts are provided by aspartate 16, histidine 18, aspartate 56, and asparagine 123. The active-site Proton donor is histidine 124. Mn(2+) is bound by residues histidine 212, histidine 240, and histidine 242. Positions 516-739 (FDAGQHKQAQ…KPGLLARRLG (224 aa)) are disordered. The segment covering 523–532 (QAQRTKRFKR) has biased composition (basic residues). The segment covering 559-568 (VEPKGNDRPT) has biased composition (basic and acidic residues). Over residues 599-636 (KRGAAAKTTAAAKKAAPGKKAAPAKKAAPAKKAAPAKK) the composition is skewed to low complexity. Basic residues predominate over residues 637-646 (APARGRKKKT). The segment covering 650-686 (DSDEEEEEDYPEDDDEEEEEADEEEEDVIMEDDEEDP) has biased composition (acidic residues). The segment covering 694 to 722 (KATSRVASTRASARATPVRATPARATQAR) has biased composition (low complexity).

The protein belongs to the MRE11/RAD32 family. In terms of assembly, component of the MRN complex composed of two heterodimers RAD50 and MRE11 associated with a single NBS1. The cofactor is Mn(2+).

It is found in the nucleus. Its subcellular location is the chromosome. It localises to the telomere. Its function is as follows. Core component of the MRN complex, which plays a central role in double-strand break (DSB) repair, DNA recombination, maintenance of telomere integrity and meiosis. The MRN complex is involved in the repair of DNA double-strand breaks (DSBs) via homologous recombination (HR), an error-free mechanism which primarily occurs during S and G2 phases. The complex (1) mediates the end resection of damaged DNA, which generates proper single-stranded DNA, a key initial steps in HR, and is (2) required for the recruitment of other repair factors and efficient activation of ATM and ATR upon DNA damage. Within the MRN complex, MRE11 possesses both single-strand endonuclease activity and double-strand-specific 3'-5' exonuclease activity. MRE11 first endonucleolytically cleaves the 5' strand at DNA DSB ends to prevent non-homologous end joining (NHEJ) and licence HR. It then generates a single-stranded DNA gap via 3' to 5' exonucleolytic degradation, which is required for single-strand invasion and recombination. The MRN complex is also required for the processing of R-loops. The protein is Double-strand break repair protein mus-23 (mus-23) of Neurospora crassa (strain ATCC 24698 / 74-OR23-1A / CBS 708.71 / DSM 1257 / FGSC 987).